A 135-amino-acid polypeptide reads, in one-letter code: ATP synthase epsilon chain (135 aa).

The protein belongs to the ATPase epsilon chain family. F-type ATPases have 2 components, CF(1) - the catalytic core - and CF(0) - the membrane proton channel. CF(1) has five subunits: alpha(3), beta(3), gamma(1), delta(1), epsilon(1). CF(0) has three main subunits: a, b and c.

It localises to the cell inner membrane. In terms of biological role, produces ATP from ADP in the presence of a proton gradient across the membrane. In Chelativorans sp. (strain BNC1), this protein is ATP synthase epsilon chain.